A 318-amino-acid polypeptide reads, in one-letter code: uncharacterized protein (318 aa).

The span at 1–22 shows a compositional bias: basic and acidic residues; that stretch reads MKASQERSEARRTAHSVKEKKY. Disordered regions lie at residues 1–29 and 293–318; these read MKAS…ASPR and DDGD…DDDE.

This is an uncharacterized protein from Ictalurid herpesvirus 1 (strain Auburn) (IcHV-1).